Reading from the N-terminus, the 356-residue chain is Tyrosine recombinase XerS (356 aa).

The region spanning 16–121 (LMPWFVLEYY…ALSSLYKYLT (106 aa)) is the Core-binding (CB) domain. The Tyr recombinase domain maps to 169–354 (KFLDYVENEY…VNDEQKNALD (186 aa)). Residues Arg-210, Lys-234, His-306, Arg-309, and His-332 contribute to the active site. Tyr-341 serves as the catalytic O-(3'-phospho-DNA)-tyrosine intermediate.

The protein belongs to the 'phage' integrase family. XerS subfamily.

It is found in the cytoplasm. With respect to regulation, ftsK is required for recombination. In terms of biological role, site-specific tyrosine recombinase, which acts by catalyzing the cutting and rejoining of the recombining DNA molecules. Essential to convert dimers of the bacterial chromosome into monomers to permit their segregation at cell division. This chain is Tyrosine recombinase XerS, found in Streptococcus thermophilus (strain ATCC BAA-491 / LMD-9).